Here is a 421-residue protein sequence, read N- to C-terminus: ATP-dependent RNA helicase RhlB (421 aa).

Residues 9–37 carry the Q motif motif; the sequence is QKFSDFALHPKVVEALEKKGFHNCTPIQA. Positions 40-219 constitute a Helicase ATP-binding domain; sequence LPLTLAGRDV…FEQMNNAEYI (180 aa). ATP is bound at residue 53–60; sequence AQTGTGKT. A DEAD box motif is present at residues 165 to 168; that stretch reads DEAD. The Helicase C-terminal domain maps to 245–390; that stretch reads RLLQTLIEEE…VSKYNPDALM (146 aa). Positions 392 to 421 are disordered; the sequence is DLPKPLRLTRPRTGNGPRRTGTPRNRRRSG. The segment covering 402-414 has biased composition (low complexity); sequence PRTGNGPRRTGTP.

It belongs to the DEAD box helicase family. RhlB subfamily. Component of the RNA degradosome, which is a multiprotein complex involved in RNA processing and mRNA degradation.

The protein localises to the cytoplasm. The enzyme catalyses ATP + H2O = ADP + phosphate + H(+). DEAD-box RNA helicase involved in RNA degradation. Has RNA-dependent ATPase activity and unwinds double-stranded RNA. In Escherichia coli O7:K1 (strain IAI39 / ExPEC), this protein is ATP-dependent RNA helicase RhlB.